The following is a 157-amino-acid chain: 2-C-methyl-D-erythritol 2,4-cyclodiphosphate synthase (157 aa).

Residues D8 and H10 each coordinate a divalent metal cation. Residues 8–10 (DVH) and 34–35 (HS) contribute to the 4-CDP-2-C-methyl-D-erythritol 2-phosphate site. Residue H42 participates in a divalent metal cation binding. Residues 56 to 58 (DIG), 61 to 65 (FPDTD), 100 to 106 (AQAPKMA), 132 to 135 (TTTE), F139, and R142 each bind 4-CDP-2-C-methyl-D-erythritol 2-phosphate.

Belongs to the IspF family. In terms of assembly, homotrimer. It depends on a divalent metal cation as a cofactor.

It carries out the reaction 4-CDP-2-C-methyl-D-erythritol 2-phosphate = 2-C-methyl-D-erythritol 2,4-cyclic diphosphate + CMP. It participates in isoprenoid biosynthesis; isopentenyl diphosphate biosynthesis via DXP pathway; isopentenyl diphosphate from 1-deoxy-D-xylulose 5-phosphate: step 4/6. In terms of biological role, involved in the biosynthesis of isopentenyl diphosphate (IPP) and dimethylallyl diphosphate (DMAPP), two major building blocks of isoprenoid compounds. Catalyzes the conversion of 4-diphosphocytidyl-2-C-methyl-D-erythritol 2-phosphate (CDP-ME2P) to 2-C-methyl-D-erythritol 2,4-cyclodiphosphate (ME-CPP) with a corresponding release of cytidine 5-monophosphate (CMP). This chain is 2-C-methyl-D-erythritol 2,4-cyclodiphosphate synthase, found in Pseudomonas syringae pv. tomato (strain ATCC BAA-871 / DC3000).